Consider the following 443-residue polypeptide: Transcriptional adapter 2-alpha (443 aa).

Ser-6 carries the phosphoserine modification. The ZZ-type zinc finger occupies 12–69; the sequence is SDKPPCRGCSSYLMEPYIKCAECGPPPFFLCLQCFTRGFEYKKHQSDHTYEIMTSDFP. Cys-17, Cys-20, Cys-31, Cys-34, Cys-42, Cys-45, His-55, and His-59 together coordinate Zn(2+). The SANT domain occupies 70 to 122; sequence VLDPSWTAQEEMALLEAVMDCGFGNWQDVANQMCTKTKEECEKHYMKHFINNP. Residues Lys-132 and Lys-138 each participate in a glycyl lysine isopeptide (Lys-Gly) (interchain with G-Cter in SUMO2) cross-link. In terms of domain architecture, SWIRM spans 356–443; it reads NSGRRSAPPL…LIREGYITKA (88 aa). Residues 426–435 mediate DNA binding; the sequence is KTRKIYDFLI.

As to quaternary structure, interacts with GCN5 and NR3C1. Associated with the P/CAF protein in the PCAF complex. Component of the PCAF complex, at least composed of TADA2L/ADA2, TADA3L/ADA3, TAF5L/PAF65-beta, TAF6L/PAF65-alpha, TAF10/TAFII30, TAF12/TAFII20, TAF9/TAFII31 and TRRAP. Component of the ADA2A-containing complex (ATAC), composed of KAT14, KAT2A, TADA2L, TADA3L, ZZ3, MBIP, WDR5, YEATS2, CCDC101 and DR1. Interacts with CCDC134.

The protein resides in the nucleus. It is found in the chromosome. Its function is as follows. Component of the ATAC complex, a complex with histone acetyltransferase activity on histones H3 and H4. Required for the function of some acidic activation domains, which activate transcription from a distant site. Binds double-stranded DNA. Binds dinucleosomes, probably at the linker region between neighboring nucleosomes. Plays a role in chromatin remodeling. May promote TP53/p53 'Lys-321' acetylation, leading to reduced TP53 stability and transcriptional activity. May also promote XRCC6 acetylation thus facilitating cell apoptosis in response to DNA damage. This is Transcriptional adapter 2-alpha (Tada2a) from Rattus norvegicus (Rat).